The following is a 243-amino-acid chain: HTH-type transcriptional regulator MlrA (243 aa).

The region spanning 3-72 is the HTH merR-type domain; that stretch reads LYTIGEVALL…VSKVKVLLSS (70 aa). The H-T-H motif DNA-binding region spans 6-25; it reads IGEVALLCDINPVTLRAWQR.

Functionally, transcriptional activator of csgD, which is required for production of the curli (AgF). In Salmonella typhimurium (strain SL1344), this protein is HTH-type transcriptional regulator MlrA.